A 410-amino-acid chain; its full sequence is Peptidase T (410 aa).

His79 contacts Zn(2+). Asp81 is a catalytic residue. Position 142 (Asp142) interacts with Zn(2+). The active-site Proton acceptor is Glu176. Residues Glu177, Asp199, and His381 each coordinate Zn(2+).

The protein belongs to the peptidase M20B family. It depends on Zn(2+) as a cofactor.

The protein resides in the cytoplasm. It catalyses the reaction Release of the N-terminal residue from a tripeptide.. Its function is as follows. Cleaves the N-terminal amino acid of tripeptides. This Bacillus cereus (strain G9842) protein is Peptidase T.